We begin with the raw amino-acid sequence, 216 residues long: Mite allergen Lep d 7 (216 aa).

Positions 1 to 19 are cleaved as a signal peptide; the sequence is MQYLAIAVIVALAGLSAAA.

This sequence belongs to the mite group 7 allergen family.

The protein resides in the secreted. The sequence is that of Mite allergen Lep d 7 from Lepidoglyphus destructor (Storage mite).